An 827-amino-acid chain; its full sequence is Probable beta-glucosidase H (827 aa).

Asp-223 is an active-site residue. Residues 387-546 form the PA14 domain; sequence RLLTNAVMHF…DSAEMVRSAV (160 aa). N-linked (GlcNAc...) asparagine glycosylation is found at Asn-471, Asn-594, Asn-600, and Asn-625.

The protein belongs to the glycosyl hydrolase 3 family.

Its subcellular location is the secreted. It carries out the reaction Hydrolysis of terminal, non-reducing beta-D-glucosyl residues with release of beta-D-glucose.. It functions in the pathway glycan metabolism; cellulose degradation. Beta-glucosidases are one of a number of cellulolytic enzymes involved in the degradation of cellulosic biomass. Catalyzes the last step releasing glucose from the inhibitory cellobiose. This Aspergillus flavus (strain ATCC 200026 / FGSC A1120 / IAM 13836 / NRRL 3357 / JCM 12722 / SRRC 167) protein is Probable beta-glucosidase H (bglH).